We begin with the raw amino-acid sequence, 326 residues long: Beta-ketoacyl-[acyl-carrier-protein] synthase III (326 aa).

Catalysis depends on residues Cys113 and His253. Positions 254 to 258 are ACP-binding; that stretch reads QANIR. Asn283 is a catalytic residue.

The protein belongs to the thiolase-like superfamily. FabH family. In terms of assembly, homodimer.

It localises to the cytoplasm. The enzyme catalyses malonyl-[ACP] + acetyl-CoA + H(+) = 3-oxobutanoyl-[ACP] + CO2 + CoA. It functions in the pathway lipid metabolism; fatty acid biosynthesis. Functionally, catalyzes the condensation reaction of fatty acid synthesis by the addition to an acyl acceptor of two carbons from malonyl-ACP. Catalyzes the first condensation reaction which initiates fatty acid synthesis and may therefore play a role in governing the total rate of fatty acid production. Possesses both acetoacetyl-ACP synthase and acetyl transacylase activities. Its substrate specificity determines the biosynthesis of branched-chain and/or straight-chain of fatty acids. The protein is Beta-ketoacyl-[acyl-carrier-protein] synthase III of Wolbachia sp. subsp. Brugia malayi (strain TRS).